Reading from the N-terminus, the 101-residue chain is Protein S100-A4 (101 aa).

At A2 the chain carries N-acetylalanine. EF-hand domains lie at 12-47 and 50-85; these read IVST…SFLG and TDEA…IAMM. K28 and E33 together coordinate Ca(2+). An N6-acetyllysine modification is found at K35. Residues D63, N65, D67, E69, and E74 each contribute to the Ca(2+) site.

It belongs to the S-100 family. In terms of assembly, homodimer. Interacts with PPFIBP1 in a calcium-dependent mode. Interacts with PGLYRP1; this complex acts as a chemoattractant that promotes lymphocyte movement. Interacts with MYH9; this interaction increases cell motility. Interacts with Annexin 2/ANXA2. Interacts with TP53; this interaction promotes TP53 degradation. Interacts with CCR5 and CXCR3. Interacts with FCGR3A; this interaction inhibits PKC-dependent phosphorylation of FCGR3A.

It is found in the secreted. Its subcellular location is the nucleus. It localises to the cytoplasm. Functionally, calcium-binding protein that plays a role in various cellular processes including motility, angiogenesis, cell differentiation, apoptosis, and autophagy. Increases cell motility and invasiveness by interacting with non-muscle myosin heavy chain (NMMHC) IIA/MYH9. Mechanistically, promotes filament depolymerization and increases the amount of soluble myosin-IIA, resulting in the formation of stable protrusions facilitating chemotaxis. Also modulates the pro-apoptotic function of TP53 by binding to its C-terminal transactivation domain within the nucleus and reducing its protein levels. Within the extracellular space, stimulates cytokine production including granulocyte colony-stimulating factor and CCL24 from T-lymphocytes. In addition, stimulates T-lymphocyte chemotaxis by acting as a chemoattractant complex with PGLYRP1 that promotes lymphocyte migration via CCR5 and CXCR3 receptors. In Rattus norvegicus (Rat), this protein is Protein S100-A4 (S100a4).